A 147-amino-acid chain; its full sequence is MLMPKKVKHRKVQRGRMKGKATRGNSIAYGDYAIQATECAWITNNQIESARIAINRYIRRGGKLWIKIFPDKPVTEKPAETRMGSGKGSPEYWVAVVKPGRILFELSGVPEETAREAMRLASHKLPIKTKFVTKRDFEEVGGESDEG.

The segment at 1–20 is disordered; that stretch reads MLMPKKVKHRKVQRGRMKGK.

Belongs to the universal ribosomal protein uL16 family. In terms of assembly, part of the 50S ribosomal subunit.

Binds 23S rRNA and is also seen to make contacts with the A and possibly P site tRNAs. The chain is Large ribosomal subunit protein uL16 from Clostridium kluyveri (strain ATCC 8527 / DSM 555 / NBRC 12016 / NCIMB 10680 / K1).